The following is a 520-amino-acid chain: Aldehyde dehydrogenase 5, mitochondrial (520 aa).

The N-terminal 23 residues, 1–23 (MLSRTRAAAPNSRIFTRSLLRLY), are a transit peptide targeting the mitochondrion. 266–271 (GSTATG) provides a ligand contact to NAD(+). E288 (proton acceptor) is an active-site residue. C322 functions as the Nucleophile in the catalytic mechanism.

It belongs to the aldehyde dehydrogenase family.

Its subcellular location is the mitochondrion matrix. The enzyme catalyses an aldehyde + NADP(+) + H2O = a carboxylate + NADPH + 2 H(+). It catalyses the reaction an aldehyde + NAD(+) + H2O = a carboxylate + NADH + 2 H(+). It functions in the pathway alcohol metabolism; ethanol degradation; acetate from ethanol: step 2/2. Its activity is regulated as follows. Induced by potassium ions. Functionally, minor mitochondrial aldehyde dehydrogenase isoform. Plays a role in regulation or biosynthesis of electron transport chain components. Involved in the biosynthesis of acetate during anaerobic growth on glucose. The protein is Aldehyde dehydrogenase 5, mitochondrial (ALD5) of Saccharomyces cerevisiae (strain YJM789) (Baker's yeast).